Here is a 257-residue protein sequence, read N- to C-terminus: Small ribosomal subunit protein uS2 (257 aa).

Belongs to the universal ribosomal protein uS2 family.

The polypeptide is Small ribosomal subunit protein uS2 (Bartonella quintana (strain Toulouse) (Rochalimaea quintana)).